The following is a 203-amino-acid chain: Peptidyl-tRNA hydrolase (203 aa).

Tyrosine 14 serves as a coordination point for tRNA. The active-site Proton acceptor is the histidine 19. TRNA contacts are provided by tyrosine 64, asparagine 66, and asparagine 112.

Belongs to the PTH family. As to quaternary structure, monomer.

Its subcellular location is the cytoplasm. It catalyses the reaction an N-acyl-L-alpha-aminoacyl-tRNA + H2O = an N-acyl-L-amino acid + a tRNA + H(+). Functionally, hydrolyzes ribosome-free peptidyl-tRNAs (with 1 or more amino acids incorporated), which drop off the ribosome during protein synthesis, or as a result of ribosome stalling. Catalyzes the release of premature peptidyl moieties from peptidyl-tRNA molecules trapped in stalled 50S ribosomal subunits, and thus maintains levels of free tRNAs and 50S ribosomes. In Methylobacterium sp. (strain 4-46), this protein is Peptidyl-tRNA hydrolase.